The sequence spans 357 residues: Homoserine kinase (357 aa).

A Glycyl lysine isopeptide (Lys-Gly) (interchain with G-Cter in ubiquitin) cross-link involves residue Lys133.

The protein belongs to the GHMP kinase family. Homoserine kinase subfamily. As to quaternary structure, homodimer.

The catalysed reaction is L-homoserine + ATP = O-phospho-L-homoserine + ADP + H(+). It functions in the pathway amino-acid biosynthesis; L-threonine biosynthesis; L-threonine from L-aspartate: step 4/5. Its function is as follows. Commits homoserine to the threonine biosynthesis pathway by catalyzing its O-phosphorylation. The protein is Homoserine kinase (THR1) of Saccharomyces cerevisiae (strain ATCC 204508 / S288c) (Baker's yeast).